Here is a 211-residue protein sequence, read N- to C-terminus: Acyl-homoserine-lactone synthase (211 aa).

It belongs to the autoinducer synthase family.

The catalysed reaction is a fatty acyl-[ACP] + S-adenosyl-L-methionine = an N-acyl-L-homoserine lactone + S-methyl-5'-thioadenosine + holo-[ACP] + H(+). Functionally, required for the synthesis of OHHL (N-(3-oxohexanoyl)-L-homoserine lactone), an autoinducer molecule which binds to TraR and thus acts in the control of conjugal transfer. This chain is Acyl-homoserine-lactone synthase (traI), found in Agrobacterium fabrum (strain C58 / ATCC 33970) (Agrobacterium tumefaciens (strain C58)).